We begin with the raw amino-acid sequence, 1120 residues long: Putative GTPase-activating protein AN11010 (1120 aa).

One can recognise a Rab-GAP TBC domain in the interval 291 to 479 (GLPNRLRGEI…RVLDVFFLEG (189 aa)). 5 disordered regions span residues 673–702 (DSPG…PSPA), 859–903 (DEVK…PNNP), 960–979 (AAKQ…SGGI), 1017–1068 (RNAL…ETDR), and 1081–1120 (GKDD…EFES). A compositionally biased stretch (low complexity) spans 864-878 (ESTPSPEGETPGTPS). Over residues 960 to 970 (AAKQQPTSSGP) the composition is skewed to polar residues. The segment covering 1023–1032 (DDDDEDDEDD) has biased composition (acidic residues). Basic and acidic residues-rich tracts occupy residues 1057-1068 (DPERRSVRETDR) and 1081-1095 (GKDD…DSHQ).

The sequence is that of Putative GTPase-activating protein AN11010 from Emericella nidulans (strain FGSC A4 / ATCC 38163 / CBS 112.46 / NRRL 194 / M139) (Aspergillus nidulans).